Consider the following 361-residue polypeptide: Spermidine/putrescine import ATP-binding protein PotA (361 aa).

The ABC transporter domain maps to 7–241 (IEVRNVSKRY…PQHRFVAQFI (235 aa)). Position 43–50 (43–50 (GPSGCGKT)) interacts with ATP.

This sequence belongs to the ABC transporter superfamily. Spermidine/putrescine importer (TC 3.A.1.11.1) family. As to quaternary structure, the complex is composed of two ATP-binding proteins (PotA), two transmembrane proteins (PotB and PotC) and a solute-binding protein (PotD).

The protein resides in the cell inner membrane. The enzyme catalyses ATP + H2O + polyamine-[polyamine-binding protein]Side 1 = ADP + phosphate + polyamineSide 2 + [polyamine-binding protein]Side 1.. Its function is as follows. Part of the ABC transporter complex PotABCD involved in spermidine/putrescine import. Responsible for energy coupling to the transport system. The chain is Spermidine/putrescine import ATP-binding protein PotA from Pseudomonas fluorescens (strain Pf0-1).